The following is a 491-amino-acid chain: bZIP transcription factor hapX (491 aa).

Positions 19 to 73 (AKPAISPSPGPGTPGSITSKEWVIPPRPKPGRKPATDTPPTKRKAQNRAAQRAFR) are disordered. The 41-residue stretch at 55–95 (DTPPTKRKAQNRAAQRAFRERRAARVNELEEQIKKIEDEHE) folds into the bZIP domain. Positions 60 to 79 (KRKAQNRAAQRAFRERRAAR) are basic motif. The interval 83–90 (LEEQIKKI) is leucine-zipper. Residues 149 to 161 (SSLSDREAVRSDK) show a composition bias toward basic and acidic residues. Disordered stretches follow at residues 149 to 196 (SSLS…REEV), 224 to 245 (EQSR…KPDP), and 397 to 416 (VSRG…SAAP). A compositionally biased stretch (low complexity) spans 397 to 413 (VSRGRSGSNNNTSSGSS).

The protein belongs to the bZIP family. YAP subfamily.

The protein resides in the nucleus. Functionally, transcription factor required for repression of genes during iron starvation. Represses iron-dependent and mitochondrial-localized activities including respiration, TCA cycle, amino acid metabolism, iron-sulfur-cluster and heme biosynthesis. Iron starvation causes a massive remodeling of the amino acid pool and hapX is essential for the coordination of the production of siderophores and their precursor ornithine. The chain is bZIP transcription factor hapX from Aspergillus fumigatus (strain ATCC MYA-4609 / CBS 101355 / FGSC A1100 / Af293) (Neosartorya fumigata).